A 518-amino-acid polypeptide reads, in one-letter code: Cytochrome P450 monooxygenase atnE (518 aa).

Residues 11–31 (FLAAFAVWMGVVVLAFAIFCV) traverse the membrane as a helical segment. Asn184 carries an N-linked (GlcNAc...) asparagine glycan. Heme is bound at residue Cys458.

This sequence belongs to the cytochrome P450 family. It depends on heme as a cofactor.

The protein resides in the membrane. It participates in secondary metabolite biosynthesis. Functionally, cytochrome P450 monooxygenase; part of the gene cluster that mediates the biosynthesis of aspercryptins, linear lipopeptides built from six amino acids including 2 highly unusual and nonproteogenic amino acids, 2-amino-octanoic acid (2aoa) and 2-amino-dodecanol (2adol). The core structure of aspercryptins is as follows: Ser/Ala-Thr-Ile/Val-2aoa-Asn-2adol. The first step of aspercryptin biosynthesis is the generation of the fatty acid precursors, octanoic and dodecanoic acids, by the FAS subunits atnF and atnM. The fatty acid precursors are likely transformed into the corresponding alpha-amino fatty acids in three steps. First, they are hydroxylated by the cytochrome P450 monooxygenase atnE, then oxidized to the corresponding alpha-keto acids by the NAD(P)-dependent oxidoreductase atnD, and finally converted to the alpha-amino fatty acids by the PLP-dependent aminotransferases atnH or atnJ. the alpha-amino fatty acids, 2-amino-octanoic and 2-amino-dodecanoic acids, are recognized, activated, and covalently tethered to the NRPS atnA by its fourth and sixth adenylation domains. The second module of atnA is the Thr module and contains an epimerase (E) domain responsible for the epimerization of Thr to D-allo-Thr. Additionally, despite atnA having only one epimerase domain, the first amino acid of aspercryptin A1 is D-Ser, suggesting that serine is either loaded directly as D-Ser on the first module or that the epimerase domain in the threonine module epimerizes both L-Ser and L-Thr. After condensation of the hexapeptide of aspercryptin, the C-terminal reductase (TE) domain might be involved in the reductive release and production of the aldehyde hexapeptide. Further reduction would generate aspercryptins. The variety of aspercryptins produced reflects the flexibility of the atnA NRPS, allowing incorporation of alanine instead of serine, valine for isoleucine, and a C10 fatty amino alcohol instead of the C12 version. AtnB seems to be involved in the selectivity for Ile versus Val by the third module. Moreover, type B, C and D aspercryptins have an additional N-terminal cichorine, acetyl and propionyl group respectively. In Emericella nidulans (strain FGSC A4 / ATCC 38163 / CBS 112.46 / NRRL 194 / M139) (Aspergillus nidulans), this protein is Cytochrome P450 monooxygenase atnE.